Here is a 495-residue protein sequence, read N- to C-terminus: UDP-glycosyltransferase 73C9 (495 aa).

Position 23-26 (23-26) interacts with UDP-alpha-D-glucose; the sequence is GHMI. The Proton acceptor role is filled by His-24. Asp-129 (charge relay) is an active-site residue. UDP-alpha-D-glucose is bound by residues 355 to 358, 373 to 381, and 397 to 398; these read WSPQ, HCGWNSTLE, and DQ.

It belongs to the UDP-glycosyltransferase family.

Its function is as follows. Possesses very weak glucosyltransferase activity toward 2,4,5-trichlorophenol (TCP), when assayed with high concentrations of TCP. The polypeptide is UDP-glycosyltransferase 73C9 (Barbarea vulgaris (Yellow rocket)).